Consider the following 619-residue polypeptide: Chaperone protein HscA homolog (619 aa).

Belongs to the heat shock protein 70 family.

In terms of biological role, chaperone involved in the maturation of iron-sulfur cluster-containing proteins. Has a low intrinsic ATPase activity which is markedly stimulated by HscB. The polypeptide is Chaperone protein HscA homolog (Acinetobacter baumannii (strain AB0057)).